A 142-amino-acid chain; its full sequence is Small ribosomal subunit protein uS12 (142 aa).

It belongs to the universal ribosomal protein uS12 family. In terms of assembly, part of the 30S ribosomal subunit.

In terms of biological role, with S4 and S5 plays an important role in translational accuracy. Located at the interface of the 30S and 50S subunits. The polypeptide is Small ribosomal subunit protein uS12 (Methanoregula boonei (strain DSM 21154 / JCM 14090 / 6A8)).